We begin with the raw amino-acid sequence, 321 residues long: Queuosine 5'-phosphate N-glycosylase/hydrolase (321 aa).

Queuine is bound by residues Phe227, Asp229, and Asp296. Asp229 acts as the Nucleophile or transition state stabilizer in catalysis.

The protein belongs to the QNG1 protein family.

The catalysed reaction is queuosine 5'-phosphate + H2O = queuine + D-ribose 5-phosphate. Catalyzes the hydrolysis of queuosine 5'-phosphate, releasing the nucleobase queuine (q). Is required for salvage of queuine from exogenous queuosine (Q) that is imported and then converted to queuosine 5'-phosphate intracellularly. In Dictyostelium discoideum (Social amoeba), this protein is Queuosine 5'-phosphate N-glycosylase/hydrolase.